The primary structure comprises 79 residues: MKEEEIIDAVYQAVVDHIYSVVPAKRIADLDISIGIEGRDLTIDITLVTDRTQEIDQKTIEEAIKVATEKADELMAKND.

The protein belongs to the UPF0440 family.

This is an uncharacterized protein from Methanocella arvoryzae (strain DSM 22066 / NBRC 105507 / MRE50).